A 135-amino-acid polypeptide reads, in one-letter code: MPTINQLIRKERKKVVKKTKSPALVECPQRRGVCTRVYTTTPKKPNSALRKVAKVRLTSKFEVISYIPGEGHNLQEHSIVLVRGGRVKDLPGVKYHIVRGALDTAGVNKRTVSRSKYGTKKAKATDKKATDSKKK.

At aspartate 89 the chain carries 3-methylthioaspartic acid. Residues 108–135 (NKRTVSRSKYGTKKAKATDKKATDSKKK) form a disordered region. The span at 111–122 (TVSRSKYGTKKA) shows a compositional bias: basic residues. Basic and acidic residues predominate over residues 123–135 (KATDKKATDSKKK).

It belongs to the universal ribosomal protein uS12 family. As to quaternary structure, part of the 30S ribosomal subunit. Contacts proteins S8 and S17. May interact with IF1 in the 30S initiation complex.

Functionally, with S4 and S5 plays an important role in translational accuracy. In terms of biological role, interacts with and stabilizes bases of the 16S rRNA that are involved in tRNA selection in the A site and with the mRNA backbone. Located at the interface of the 30S and 50S subunits, it traverses the body of the 30S subunit contacting proteins on the other side and probably holding the rRNA structure together. The combined cluster of proteins S8, S12 and S17 appears to hold together the shoulder and platform of the 30S subunit. The polypeptide is Small ribosomal subunit protein uS12 (Helicobacter pylori (strain HPAG1)).